The chain runs to 339 residues: DNA-directed RNA polymerase subunit alpha (339 aa).

Positions 1-235 are alpha N-terminal domain (alpha-NTD); it reads MVLQKNWQSL…DQLQLFINFD (235 aa). Positions 251–339 are alpha C-terminal domain (alpha-CTD); sequence FNRNLLRKVD…DLAKRLDEPF (89 aa).

It belongs to the RNA polymerase alpha chain family. As to quaternary structure, homodimer. The RNAP catalytic core consists of 2 alpha, 1 beta, 1 beta' and 1 omega subunit. When a sigma factor is associated with the core the holoenzyme is formed, which can initiate transcription.

It catalyses the reaction RNA(n) + a ribonucleoside 5'-triphosphate = RNA(n+1) + diphosphate. DNA-dependent RNA polymerase catalyzes the transcription of DNA into RNA using the four ribonucleoside triphosphates as substrates. This chain is DNA-directed RNA polymerase subunit alpha, found in Gluconacetobacter diazotrophicus (strain ATCC 49037 / DSM 5601 / CCUG 37298 / CIP 103539 / LMG 7603 / PAl5).